Consider the following 581-residue polypeptide: MRTSLLFYRTSKNANKEASVLSYELLQKAGYLFKTSKGIYSYTPLFQRVILKMTEIIREELNAIGGQEVCLPLLQPAELWEKTGRWKAFLSEKLLYVLKDRENKAMCLAPTHEEVVSEFVAQWLTGREQLPIHLYQIGTKFRDEIRPRFGLMRAKEFLMEDSYTFSDSPEQMEEQYAKLRLAYQRIFDRLNLKYVIVAADGGKIGKGKSEEFHVLCSLGEDTICVSGSYGANVEAAQAIPPSYVYDSNLLPVEEVATPNIRTIEDLEVFFNTPKHKILKTLVVKTRQKDSEKFFAICIRGDRQINLTKVASFLQVDDCELASEEEILKHLHVEKGFIGPLYCPIPCYADETTRPMTNFICANNQKDVHCKHMNWGRDIPLPAFGDFLLAEAGDLCPQNGGAPYEIFQGVEVAHIFNLGTRYTESFSVGFQDKNGDKQLCWMGTYGIGVGRTLAACIEQLADNKGLVWPLAVTPFSITILYNGGDTEGEATALQLYQSLNTEGFEPLLDDRNERLGFKLKDSDLLGIPYKLIIGKSFQSTGLLEIESRSGEKCNVSPENLLDWCSKNLPCHTRKIPPLQEQN.

The protein belongs to the class-II aminoacyl-tRNA synthetase family. ProS type 1 subfamily. As to quaternary structure, homodimer.

Its subcellular location is the cytoplasm. The enzyme catalyses tRNA(Pro) + L-proline + ATP = L-prolyl-tRNA(Pro) + AMP + diphosphate. Its function is as follows. Catalyzes the attachment of proline to tRNA(Pro) in a two-step reaction: proline is first activated by ATP to form Pro-AMP and then transferred to the acceptor end of tRNA(Pro). As ProRS can inadvertently accommodate and process non-cognate amino acids such as alanine and cysteine, to avoid such errors it has two additional distinct editing activities against alanine. One activity is designated as 'pretransfer' editing and involves the tRNA(Pro)-independent hydrolysis of activated Ala-AMP. The other activity is designated 'posttransfer' editing and involves deacylation of mischarged Ala-tRNA(Pro). The misacylated Cys-tRNA(Pro) is not edited by ProRS. This is Proline--tRNA ligase from Chlamydia trachomatis serovar A (strain ATCC VR-571B / DSM 19440 / HAR-13).